Consider the following 193-residue polypeptide: MQSKLILASTSPFRKEILSKIQLDFDAISPVCDETPLKNESPINLVTRLAETKANSCGIEDPNYLIIGSDQVCVINEKIVGKPLTREKAVQQLEEASGHKITFYTGLSVFNTTTKQADTICEEFNVYFRQLTRKQIENYVDKEEPFYCAGSFKCEGLGIALFEKLEGKDPNTLIGLPLISLIDMLEKQGLNVL.

The active-site Proton acceptor is the Asp70.

It belongs to the Maf family. YceF subfamily. A divalent metal cation serves as cofactor.

It localises to the cytoplasm. It carries out the reaction N(7)-methyl-GTP + H2O = N(7)-methyl-GMP + diphosphate + H(+). Its function is as follows. Nucleoside triphosphate pyrophosphatase that hydrolyzes 7-methyl-GTP (m(7)GTP). May have a dual role in cell division arrest and in preventing the incorporation of modified nucleotides into cellular nucleic acids. This Aliivibrio fischeri (strain ATCC 700601 / ES114) (Vibrio fischeri) protein is 7-methyl-GTP pyrophosphatase.